We begin with the raw amino-acid sequence, 230 residues long: 2-amino-5-formylamino-6-ribosylaminopyrimidin-4(3H)-one 5'-monophosphate deformylase (230 aa).

The Fe cation site is built by Glu-29, His-31, Asp-40, and His-109.

Belongs to the creatininase superfamily. FAPy deformylase family. In terms of assembly, homodimer. It depends on Fe(2+) as a cofactor. Requires Zn(2+) as cofactor.

It carries out the reaction 2-amino-5-formylamino-6-(5-phospho-D-ribosylamino)pyrimidin-4(3H)-one + H2O = 2,5-diamino-6-(1-D-ribosylamino)pyrimidin-4(3H)-one 5'-phosphate + formate + H(+). Its pathway is cofactor biosynthesis; coenzyme F420 biosynthesis. The protein operates within cofactor biosynthesis; riboflavin biosynthesis. In terms of biological role, catalyzes the hydrolysis of the formamide of 2-amino-5-formylamino-6-ribosylamino-4(3H)-pyrimidinone 5'-monophosphate (FAPy) to form 2,5-diamino-6-ribosylamino-4(3H)-pyrimidinone 5'-phosphate (APy). This chain is 2-amino-5-formylamino-6-ribosylaminopyrimidin-4(3H)-one 5'-monophosphate deformylase, found in Methanobrevibacter smithii (strain ATCC 35061 / DSM 861 / OCM 144 / PS).